Reading from the N-terminus, the 228-residue chain is DNA mismatch repair protein MutH (228 aa).

This sequence belongs to the MutH family.

The protein localises to the cytoplasm. Its function is as follows. Sequence-specific endonuclease that cleaves unmethylated GATC sequences. It is involved in DNA mismatch repair. In Yersinia enterocolitica serotype O:8 / biotype 1B (strain NCTC 13174 / 8081), this protein is DNA mismatch repair protein MutH.